The chain runs to 100 residues: UPF0213 protein FN1575 (100 aa).

In terms of domain architecture, GIY-YIG spans 1–77 (MAYYLYMLRC…KYIKKKKENI (77 aa)).

Belongs to the UPF0213 family.

In Fusobacterium nucleatum subsp. nucleatum (strain ATCC 25586 / DSM 15643 / BCRC 10681 / CIP 101130 / JCM 8532 / KCTC 2640 / LMG 13131 / VPI 4355), this protein is UPF0213 protein FN1575.